The following is a 221-amino-acid chain: Glutathione peroxidase (221 aa).

A signal peptide spans 1–19 (MFIQLLILSYAILLQLIAT). Asn-28 carries N-linked (GlcNAc...) asparagine glycosylation. Cys-72 is a catalytic residue. N-linked (GlcNAc...) asparagine glycosylation is found at Asn-87 and Asn-90.

This sequence belongs to the glutathione peroxidase family. In terms of assembly, homotetramer.

The protein resides in the secreted. Its subcellular location is the extracellular space. The catalysed reaction is 2 glutathione + H2O2 = glutathione disulfide + 2 H2O. The chain is Glutathione peroxidase from Dirofilaria immitis (Canine heartworm).